We begin with the raw amino-acid sequence, 471 residues long: Putative ABC transporter ATP-binding protein STK_11360 (471 aa).

2 ABC transporter domains span residues 4-241 (LEIK…LEPL) and 255-470 (VILE…VIKD). Residues 37 to 44 (GKSGSGKS) and 286 to 293 (GDNGSGKS) each bind ATP.

This sequence belongs to the ABC transporter superfamily.

It localises to the cell membrane. In terms of biological role, probably part of an ABC transporter complex. Responsible for energy coupling to the transport system. The protein is Putative ABC transporter ATP-binding protein STK_11360 of Sulfurisphaera tokodaii (strain DSM 16993 / JCM 10545 / NBRC 100140 / 7) (Sulfolobus tokodaii).